The following is a 407-amino-acid chain: MTETTPKTAPWTVQKRTAVLVLADGTVIEGKGLGATGAVEAEVVFNTALTGYEEILTDPSYAGQIVTFTFPHIGNVGANAEDIEDLTPANRHGAVGAIFKADITAPSNFRAAKDLDSWLKHRGIIALAGIDTRALTALIRERGAQNAVIAHDPNGNFDLDALKARAANWCGLENLDLAKDVTIGQSLVWKELPWTLQDGYGEQDAPQYHVVALDFGVKRNILRLLTGLGAKVTVLPATATAEDVLAHNPDGVFLSNGPGDPAATGEYAVPTIGKLVETGIPLFGICLGHQMLALALGGRTEKMHQGHHGANHPVKDYTTGKVEIVSMNHGFAVDSDSLPENVEETHVSLFDGTNCGLRVVGKPVFSVQHHPEASPGPQDSHYLFRRFINLIRERKGQAPLPEREQAA.

The interval 1–205 is CPSase; that stretch reads MTETTPKTAP…LQDGYGEQDA (205 aa). Ser-60, Gly-257, and Gly-259 together coordinate L-glutamine. One can recognise a Glutamine amidotransferase type-1 domain in the interval 209–397; sequence HVVALDFGVK…INLIRERKGQ (189 aa). Cys-286 (nucleophile) is an active-site residue. Residues Leu-287, Gln-290, Asn-328, Gly-330, and Phe-331 each coordinate L-glutamine. Active-site residues include His-370 and Glu-372.

It belongs to the CarA family. In terms of assembly, composed of two chains; the small (or glutamine) chain promotes the hydrolysis of glutamine to ammonia, which is used by the large (or ammonia) chain to synthesize carbamoyl phosphate. Tetramer of heterodimers (alpha,beta)4.

It carries out the reaction hydrogencarbonate + L-glutamine + 2 ATP + H2O = carbamoyl phosphate + L-glutamate + 2 ADP + phosphate + 2 H(+). The enzyme catalyses L-glutamine + H2O = L-glutamate + NH4(+). The protein operates within amino-acid biosynthesis; L-arginine biosynthesis; carbamoyl phosphate from bicarbonate: step 1/1. It functions in the pathway pyrimidine metabolism; UMP biosynthesis via de novo pathway; (S)-dihydroorotate from bicarbonate: step 1/3. In terms of biological role, small subunit of the glutamine-dependent carbamoyl phosphate synthetase (CPSase). CPSase catalyzes the formation of carbamoyl phosphate from the ammonia moiety of glutamine, carbonate, and phosphate donated by ATP, constituting the first step of 2 biosynthetic pathways, one leading to arginine and/or urea and the other to pyrimidine nucleotides. The small subunit (glutamine amidotransferase) binds and cleaves glutamine to supply the large subunit with the substrate ammonia. This Brucella abortus (strain S19) protein is Carbamoyl phosphate synthase small chain.